The sequence spans 249 residues: Diaminopimelate epimerase (249 aa).

Positions 11 and 60 each coordinate substrate. The active-site Proton donor is Cys-69. Substrate is bound by residues 70-71 (GN), Asn-164, and 182-183 (ER). Catalysis depends on Cys-192, which acts as the Proton acceptor. 193–194 (GT) contacts substrate.

It belongs to the diaminopimelate epimerase family. As to quaternary structure, homodimer.

It localises to the cytoplasm. It catalyses the reaction (2S,6S)-2,6-diaminopimelate = meso-2,6-diaminopimelate. Its pathway is amino-acid biosynthesis; L-lysine biosynthesis via DAP pathway; DL-2,6-diaminopimelate from LL-2,6-diaminopimelate: step 1/1. Catalyzes the stereoinversion of LL-2,6-diaminopimelate (L,L-DAP) to meso-diaminopimelate (meso-DAP), a precursor of L-lysine and an essential component of the bacterial peptidoglycan. This Campylobacter jejuni subsp. doylei (strain ATCC BAA-1458 / RM4099 / 269.97) protein is Diaminopimelate epimerase.